We begin with the raw amino-acid sequence, 163 residues long: Neurotrophin-3 (163 aa).

Residues 1–3 (IQS) form the signal peptide. The propeptide occupies 4 to 119 (SSMDQGILTE…VLNRTSRRKR (116 aa)). Residues 36–61 (QTARTKDGMQTTVKKTEAEADARASQ) are disordered. Residues 49-61 (KKTEAEADARASQ) show a composition bias toward basic and acidic residues. Asn112 carries an N-linked (GlcNAc...) asparagine glycan.

This sequence belongs to the NGF-beta family.

It is found in the secreted. Its function is as follows. Seems to promote the survival of visceral and proprioceptive sensory neurons. The sequence is that of Neurotrophin-3 (NTF3) from Boa constrictor (Boa).